The primary structure comprises 133 residues: Small ribosomal subunit protein uS8 (133 aa).

This sequence belongs to the universal ribosomal protein uS8 family. In terms of assembly, part of the 30S ribosomal subunit. Contacts proteins S5 and S12.

One of the primary rRNA binding proteins, it binds directly to 16S rRNA central domain where it helps coordinate assembly of the platform of the 30S subunit. The sequence is that of Small ribosomal subunit protein uS8 from Koribacter versatilis (strain Ellin345).